Reading from the N-terminus, the 312-residue chain is Elongation factor Ts (312 aa).

Positions 84–87 (TDFV) are involved in Mg(2+) ion dislocation from EF-Tu.

It belongs to the EF-Ts family.

The protein resides in the cytoplasm. Its function is as follows. Associates with the EF-Tu.GDP complex and induces the exchange of GDP to GTP. It remains bound to the aminoacyl-tRNA.EF-Tu.GTP complex up to the GTP hydrolysis stage on the ribosome. This Caulobacter vibrioides (strain ATCC 19089 / CIP 103742 / CB 15) (Caulobacter crescentus) protein is Elongation factor Ts.